Reading from the N-terminus, the 190-residue chain is dTTP/UTP pyrophosphatase (190 aa).

Residue Asp71 is the Proton acceptor of the active site.

The protein belongs to the Maf family. YhdE subfamily. Requires a divalent metal cation as cofactor.

Its subcellular location is the cytoplasm. It catalyses the reaction dTTP + H2O = dTMP + diphosphate + H(+). It carries out the reaction UTP + H2O = UMP + diphosphate + H(+). Functionally, nucleoside triphosphate pyrophosphatase that hydrolyzes dTTP and UTP. May have a dual role in cell division arrest and in preventing the incorporation of modified nucleotides into cellular nucleic acids. The chain is dTTP/UTP pyrophosphatase from Xanthomonas campestris pv. campestris (strain ATCC 33913 / DSM 3586 / NCPPB 528 / LMG 568 / P 25).